Consider the following 158-residue polypeptide: Trafficking protein particle complex subunit 6B (158 aa).

Belongs to the TRAPP small subunits family. BET3 subfamily. In terms of assembly, homodimer. Part of a TRAPP complex. Heterodimer with TRAPPC3. The heterodimer TRAPPC6B-TRAPPC3 interacts with TRAPPC1 likely providing a core for TRAPP complex formation. As to expression, widely expressed. Expressed in lung, heart, liver, spleen, brain and kidney.

The protein resides in the golgi apparatus. The protein localises to the cis-Golgi network. It localises to the endoplasmic reticulum. Functionally, component of a transport protein particle (TRAPP) complex that may function in specific stages of inter-organelle traffic. Specifically involved in the early development of neural circuitry, likely by controlling the frequency and amplitude of intracellular calcium transients implicated in the regulation of neuron differentiation and survival. This Mus musculus (Mouse) protein is Trafficking protein particle complex subunit 6B.